Reading from the N-terminus, the 310-residue chain is Glutaminase (310 aa).

Serine 67, asparagine 118, glutamate 161, asparagine 168, tyrosine 192, tyrosine 244, and valine 262 together coordinate substrate.

Belongs to the glutaminase family. Homotetramer.

The enzyme catalyses L-glutamine + H2O = L-glutamate + NH4(+). The protein is Glutaminase of Legionella pneumophila (strain Paris).